Reading from the N-terminus, the 268-residue chain is Tropinone reductase homolog At2g29150 (268 aa).

Position 22–46 (22–46) interacts with NADP(+); it reads LVTGGSKGLGEAVVEELAMLGARVH. A substrate-binding site is contributed by serine 155. Tyrosine 167 (proton acceptor) is an active-site residue.

Belongs to the short-chain dehydrogenases/reductases (SDR) family. SDR65C subfamily.

Enantiospecific reductase active on cyclic monoterpenes and small flexible lipophilic carbonyls. No activity with tropinone, nitrogen-containing tropinone analogs, tropine or pseudotropine as substrate. This is Tropinone reductase homolog At2g29150 from Arabidopsis thaliana (Mouse-ear cress).